Reading from the N-terminus, the 145-residue chain is MRGLLQRVRGARVEVAGEVVGAIDQGLLVLVAVEPEDSREQADKLLHKLLNYRVFSDEQGKMNLSLKDVGGGLLLVSQFTLAADTRNGMRPSFSTAAPPALGAELFDYLLQQANAQHADVASGRFGADMQVHLVNDGPVTFMLQM.

The Gly-cisPro motif, important for rejection of L-amino acids motif lies at 137–138 (GP).

The protein belongs to the DTD family. In terms of assembly, homodimer.

The protein localises to the cytoplasm. The catalysed reaction is glycyl-tRNA(Ala) + H2O = tRNA(Ala) + glycine + H(+). The enzyme catalyses a D-aminoacyl-tRNA + H2O = a tRNA + a D-alpha-amino acid + H(+). An aminoacyl-tRNA editing enzyme that deacylates mischarged D-aminoacyl-tRNAs. Also deacylates mischarged glycyl-tRNA(Ala), protecting cells against glycine mischarging by AlaRS. Acts via tRNA-based rather than protein-based catalysis; rejects L-amino acids rather than detecting D-amino acids in the active site. By recycling D-aminoacyl-tRNA to D-amino acids and free tRNA molecules, this enzyme counteracts the toxicity associated with the formation of D-aminoacyl-tRNA entities in vivo and helps enforce protein L-homochirality. This chain is D-aminoacyl-tRNA deacylase, found in Pseudomonas putida (strain GB-1).